The chain runs to 467 residues: Ribulose bisphosphate carboxylase large chain (467 aa).

N6,N6,N6-trimethyllysine is present on Lys5. Positions 114 and 164 each coordinate substrate. Lys166 functions as the Proton acceptor in the catalytic mechanism. Lys168 provides a ligand contact to substrate. Mg(2+) is bound by residues Lys192, Asp194, and Glu195. Lys192 bears the N6-carboxylysine mark. His285 (proton acceptor) is an active-site residue. Arg286, His318, and Ser370 together coordinate substrate.

It belongs to the RuBisCO large chain family. Type I subfamily. As to quaternary structure, heterohexadecamer of 8 large chains and 8 small chains; disulfide-linked. The disulfide link is formed within the large subunit homodimers. It depends on Mg(2+) as a cofactor. In terms of processing, the disulfide bond which can form in the large chain dimeric partners within the hexadecamer appears to be associated with oxidative stress and protein turnover.

It localises to the plastid. Its subcellular location is the chloroplast. The catalysed reaction is 2 (2R)-3-phosphoglycerate + 2 H(+) = D-ribulose 1,5-bisphosphate + CO2 + H2O. It carries out the reaction D-ribulose 1,5-bisphosphate + O2 = 2-phosphoglycolate + (2R)-3-phosphoglycerate + 2 H(+). RuBisCO catalyzes two reactions: the carboxylation of D-ribulose 1,5-bisphosphate, the primary event in carbon dioxide fixation, as well as the oxidative fragmentation of the pentose substrate in the photorespiration process. Both reactions occur simultaneously and in competition at the same active site. The protein is Ribulose bisphosphate carboxylase large chain of Jasminum simplicifolium subsp. suavissimum (Native jasmine).